The sequence spans 392 residues: VHSVVDYVSAAEHQVYPWGINDPTEGNRTTLHLPWLKTLSTDWHIDGKGWYSTTRGNNAIAQENPTGGPEYENNYRPKSPLFIFKYPYSKAMTPPSSYRDASITQLFYTTNVYHDVLYILGFNEKAGNFQINNWNKGGVGGDYAILNSQDGSGVNNANFATPPDGQPGRMRMYTWNASIPERDGCFEAGIVIHEYTHGVSNRLTGGPENSRCLAALESGGMGEGWSDFFATAIRLKPGDTRATDYTMGEWASNRPNGIRKYRYSTSLTTNPHMYVDADGLTSVHAIGNIWASMLYELLWNLIDKHGKGDVTKIRPVLKNGVPTDGRHLAMKIVLDGMALQPCLPNFVQARDAILDADKNLTQGSNKCEIWKAFAKRGLGVGAVFNLSKRTGS.

Positions 1-9 are excised as a propeptide; it reads VHSVVDYVS. A glycan (N-linked (GlcNAc...) asparagine) is linked at N176. H193 is a Zn(2+) binding site. The active site involves E194. H197 serves as a coordination point for Zn(2+). N359 and N385 each carry an N-linked (GlcNAc...) asparagine glycan.

Belongs to the peptidase M36 family. It depends on Zn(2+) as a cofactor.

It localises to the secreted. Secreted metalloproteinase probably acting as a virulence factor. In Trichophyton soudanense, this protein is Extracellular metalloproteinase 4 (MEP4).